The chain runs to 213 residues: NADH-quinone oxidoreductase subunit I (213 aa).

2 consecutive 4Fe-4S ferredoxin-type domains span residues 74–103 (RFIE…METS) and 113–142 (ENYS…HGTE). Residues Cys83, Cys86, Cys89, Cys93, Cys122, Cys125, Cys128, and Cys132 each contribute to the [4Fe-4S] cluster site.

It belongs to the complex I 23 kDa subunit family. NDH-1 is composed of 14 different subunits. Subunits NuoA, H, J, K, L, M, N constitute the membrane sector of the complex. [4Fe-4S] cluster serves as cofactor.

Its subcellular location is the cell inner membrane. The enzyme catalyses a quinone + NADH + 5 H(+)(in) = a quinol + NAD(+) + 4 H(+)(out). In terms of biological role, NDH-1 shuttles electrons from NADH, via FMN and iron-sulfur (Fe-S) centers, to quinones in the respiratory chain. The immediate electron acceptor for the enzyme in this species is believed to be ubiquinone. Couples the redox reaction to proton translocation (for every two electrons transferred, four hydrogen ions are translocated across the cytoplasmic membrane), and thus conserves the redox energy in a proton gradient. In Campylobacter jejuni subsp. jejuni serotype O:23/36 (strain 81-176), this protein is NADH-quinone oxidoreductase subunit I.